The following is a 186-amino-acid chain: Inosine/xanthosine triphosphatase (186 aa).

Glutamine 75 is a Mg(2+) binding site.

The protein belongs to the YjjX NTPase family. As to quaternary structure, homodimer. Requires Mg(2+) as cofactor. Mn(2+) serves as cofactor.

It carries out the reaction XTP + H2O = XDP + phosphate + H(+). The catalysed reaction is ITP + H2O = IDP + phosphate + H(+). Its function is as follows. Phosphatase that hydrolyzes non-canonical purine nucleotides such as XTP and ITP to their respective diphosphate derivatives. Probably excludes non-canonical purines from DNA/RNA precursor pool, thus preventing their incorporation into DNA/RNA and avoiding chromosomal lesions. The sequence is that of Inosine/xanthosine triphosphatase from Shewanella baltica (strain OS195).